A 464-amino-acid polypeptide reads, in one-letter code: Potassium/proton antiporter CemA (464 aa).

5 helical membrane passes run 36–56 (FSLSLWGILKYSGIYFCTEIL), 241–261 (ASVSLQYVGFLLFLFPIQIAI), 341–361 (LLLRLATNAISIATLFPLLIF), 389–409 (ILLLTDLCVGFHSPHGWEILV), and 425–445 (TPCFVSTFPVILDTLFKYWIF).

Belongs to the CemA family.

It is found in the plastid. The protein resides in the chloroplast inner membrane. It carries out the reaction K(+)(in) + H(+)(out) = K(+)(out) + H(+)(in). Contributes to K(+)/H(+) antiport activity by supporting proton efflux to control proton extrusion and homeostasis in chloroplasts in a light-dependent manner to modulate photosynthesis. Prevents excessive induction of non-photochemical quenching (NPQ) under continuous-light conditions. Indirectly promotes efficient inorganic carbon uptake into chloroplasts. The polypeptide is Potassium/proton antiporter CemA (Adiantum capillus-veneris (Maidenhair fern)).